A 517-amino-acid polypeptide reads, in one-letter code: Nectin-1 (517 aa).

Positions 1–30 (MARMGLAGAAGRWWGLALGLTAFFLPGVHS) are cleaved as a signal peptide. The Ig-like V-type domain occupies 31-141 (QVVQVNDSMY…GNRESQLNLT (111 aa)). At 31–355 (QVVQVNDSMY…GRRAGPVPTA (325 aa)) the chain is on the extracellular side. Residues Asn-36, Asn-72, and Asn-139 are each glycosylated (N-linked (GlcNAc...) asparagine). Cys-51 and Cys-124 are oxidised to a cystine. Ig-like C2-type domains lie at 149–238 (WIEG…FKES) and 247–334 (PEVT…VNIT). 2 disulfide bridges follow: Cys-172/Cys-226 and Cys-269/Cys-316. N-linked (GlcNAc...) (complex) asparagine glycosylation occurs at Asn-202. The segment at 282 to 299 (WTTLNGSLPKGVEAQNRT) is interaction with FGFR. N-linked (GlcNAc...) asparagine glycans are attached at residues Asn-286, Asn-297, Asn-307, and Asn-332. Residues 356 to 376 (IIGGVAGSILLVLIVVGGIVV) traverse the membrane as a helical segment. Topologically, residues 377 to 517 (ALRRRRHTFK…SFISKKEWYV (141 aa)) are cytoplasmic. The disordered stretch occupies residues 399-488 (GYSKAGIPQH…DGYGDRTLGY (90 aa)). Ser-422, Ser-434, and Ser-435 each carry phosphoserine. A Phosphotyrosine modification is found at Tyr-436. The segment covering 436-445 (YEEEEEEEEG) has biased composition (acidic residues). Positions 449–466 (GERKVGGPHPKYDEDAKR) are enriched in basic and acidic residues. Position 511 is a phosphoserine (Ser-511).

It belongs to the nectin family. Cis- and trans-homodimer. Can form trans-heterodimers with NECTIN3 and with NECTIN4. Interaction between NECTIN1 and NECTIN3 on the pre- and postsynaptic sites, respectively, initiates the formation of puncta adherentia junctions between axons and dendrites. Interacts (via cytoplasmic domain) with AFDN (via PDZ domain); this interaction recruits NECTIN1 to cadherin-based adherens junctions and provides a connection with the actin cytoskeleton. Interacts with integrin alphaV/beta3. Interacts (via Ig-like C2-type domain 2) with FGFR1, FGFR2 and FGFR3. In terms of assembly, (Microbial infection) Interacts with herpes simplex virus 1/HHV-1, herpes simplex virus 2/HHV-2, and pseudorabies virus/PRV envelope glycoprotein D. Post-translationally, (Microbial infection) Ubiquitinated by CBL following infection by herpes simplex virus 1/HHV-1 and association with HHV-1 envelope glycoprotein D, leading to its removal from cell surface.

It is found in the cell membrane. Its subcellular location is the cell junction. It localises to the adherens junction. The protein resides in the presynaptic cell membrane. The protein localises to the secreted. Functionally, cell adhesion molecule that promotes cell-cell contacts and plays important roles in the development of the nervous system. Acts by forming homophilic or heterophilic trans-dimers. Heterophilic interactions have been detected between NECTIN1 and NECTIN3 and between NECTIN1 and NECTIN4. Involved in axon guidance by promoting contacts between the commissural axons and the floor plate cells. Involved in synaptogegesis. Has some neurite outgrowth-promoting activity. Promotes formation of checkerboard-like cellular pattern of hair cells and supporting cells in the auditory epithelium via heterophilic interaction with NECTIN3: NECTIN1 is present in the membrane of hair cells and associates with NECTIN3 on supporting cells, thereby mediating heterotypic adhesion between these two cell types. Required for enamel mineralization. In terms of biological role, (Microbial infection) Acts as a receptor for herpes simplex virus 1/HHV-1, herpes simplex virus 2/HHV-2, and pseudorabies virus/PRV. Constitutes the major receptor for herpes simplex virus 1/HHV-1 entry into host cells. The protein is Nectin-1 of Homo sapiens (Human).